Here is a 261-residue protein sequence, read N- to C-terminus: Syntaxin-7 (261 aa).

At serine 2 the chain carries N-acetylserine. Topologically, residues 2 to 238 (SYTPGVGGDP…DYQRKSRKTL (237 aa)) are cytoplasmic. Threonine 4 carries the phosphothreonine modification. Serine 45 carries the post-translational modification Phosphoserine. Residues 47-69 (ELRQQLQQKQQYTNQLTKETDKY) are a coiled coil. Position 75 is a phosphoserine (serine 75). Phosphothreonine is present on threonine 79. Phosphoserine occurs at positions 125, 126, 129, and 205. The disordered stretch occupies residues 129 to 148 (SGSFPEDSSKERNLVSWESQ). The t-SNARE coiled-coil homology domain maps to 165–227 (LRLIHERESS…QQANQQLSRA (63 aa)). A helical; Anchor for type IV membrane protein transmembrane segment spans residues 239–259 (CIIILILVIGVVIIGLIIWGL). The Vesicular portion of the chain corresponds to 260–261 (NR).

This sequence belongs to the syntaxin family. Forms a SNARE complex with VTI1B, STX8 and VAMP8 which functions in the homotypic fusion of late endosomes. Component of the SNARE complex composed of STX7, STX8, VAMP7 and VTI1B that is required for heterotypic fusion of late endosomes with lysosomes. Interacts with VPS11, VPS16 and VPS18. Interacts with VPS33A. Interacts with TPC1.

It localises to the early endosome membrane. In terms of biological role, may be involved in protein trafficking from the plasma membrane to the early endosome (EE) as well as in homotypic fusion of endocytic organelles. Mediates the endocytic trafficking from early endosomes to late endosomes and lysosomes. This is Syntaxin-7 (STX7) from Pongo abelii (Sumatran orangutan).